Consider the following 670-residue polypeptide: DNA ligase (670 aa).

NAD(+) is bound by residues 31-35 (DAEYD), 76-77 (SL), and Glu-108. Lys-110 acts as the N6-AMP-lysine intermediate in catalysis. The NAD(+) site is built by Arg-131, Glu-166, Lys-271, and Lys-295. The Zn(2+) site is built by Cys-388, Cys-391, Cys-406, and Cys-412. Positions 579 to 668 (NIGGSLSGKK…NTPALKKETS (90 aa)) constitute a BRCT domain.

The protein belongs to the NAD-dependent DNA ligase family. LigA subfamily. The cofactor is Mg(2+). Mn(2+) serves as cofactor.

It carries out the reaction NAD(+) + (deoxyribonucleotide)n-3'-hydroxyl + 5'-phospho-(deoxyribonucleotide)m = (deoxyribonucleotide)n+m + AMP + beta-nicotinamide D-nucleotide.. Its function is as follows. DNA ligase that catalyzes the formation of phosphodiester linkages between 5'-phosphoryl and 3'-hydroxyl groups in double-stranded DNA using NAD as a coenzyme and as the energy source for the reaction. It is essential for DNA replication and repair of damaged DNA. This chain is DNA ligase, found in Neorickettsia sennetsu (strain ATCC VR-367 / Miyayama) (Ehrlichia sennetsu).